Reading from the N-terminus, the 456-residue chain is MNYPAEPFRIKSVETVSMIPRDERLKKMQEAGYNTFLLNSKDIYIDLLTDSGTNAMSDKQWAGMMMGDEAYAGSENFYHLERTVQELFGFKHIVPTHQGRGAENLLSQLAIKPGQYVAGNMYFTTTRYHQEKNGAVFVDIVRDEAHDAGLNIAFKGDIDLKKLQKLIDEKGAENIAYICLAVTVNLAGGQPVSMANMRAVRELTAAHGIKVFYDATRCVENAYFIKEQEQGFENKSIAEIVHEMFSYADGCTMSGKKDCLVNIGGFLCMNDDEMFSSAKELVVVYEGMPSYGGLAGRDMEAMAIGLREAMQYEYIEHRVKQVRYLGDKLKAAGVPIVEPVGGHAVFLDARRFCEHLTQDEFPAQSLAASIYVETGVRSMERGIISAGRNNVTGEHHRPKLETVRLTIPRRVYTYAHMDVVADGIIKLYQHKEDIRGLKFIYEPKQLRFFTARFDYI.

Lysine 257 is subject to N6-(pyridoxal phosphate)lysine.

It belongs to the beta-eliminating lyase family. As to quaternary structure, homotetramer. It depends on pyridoxal 5'-phosphate as a cofactor.

The catalysed reaction is L-tyrosine + H2O = phenol + pyruvate + NH4(+). The polypeptide is Tyrosine phenol-lyase (tpl) (Citrobacter intermedius (Escherichia intermedia)).